The following is a 381-amino-acid chain: Chymosin (381 aa).

The N-terminal stretch at 1–16 is a signal peptide; the sequence is MRGFVVLLAVFALSQA. The propeptide at 17–58 is activation peptide; the sequence is SGIVRIPLHKGKSLRRALKERGLLEDFLKNHQHAVSRKHSNS. The Peptidase A1 domain maps to 74 to 378; sequence YFGKIYIGTP…DRASNLVGLA (305 aa). Asp-92 is an active-site residue. Repeat 1 spans residues 92–102; that stretch reads DTGSSDLWVPS. 2 disulfides stabilise this stretch: Cys-105–Cys-110 and Cys-265–Cys-269. Residue Asp-274 is part of the active site. The stretch at 274–284 is repeat 2; the sequence is DTGTSMLVGPG. A disulfide bridge connects residues Cys-308 and Cys-341.

The protein belongs to the peptidase A1 family. Monomer.

The catalysed reaction is Broad specificity similar to that of pepsin A. Clots milk by cleavage of a single 104-Ser-Phe-|-Met-Ala-107 bond in kappa-chain of casein.. Its activity is regulated as follows. Inhibited by pepstatin. Functionally, hydrolyzes a variety of proteins. In Callithrix jacchus (White-tufted-ear marmoset), this protein is Chymosin (CYM).